The following is a 509-amino-acid chain: Maturase K (509 aa).

This sequence belongs to the intron maturase 2 family. MatK subfamily.

The protein localises to the plastid. It localises to the chloroplast. Functionally, usually encoded in the trnK tRNA gene intron. Probably assists in splicing its own and other chloroplast group II introns. The chain is Maturase K from Vatairea macrocarpa.